A 430-amino-acid polypeptide reads, in one-letter code: Aspartate aminotransferase, mitochondrial (430 aa).

The transit peptide at 1–29 directs the protein to the mitochondrion; sequence MALLHSGRALPGIAAAFHPGLAAAASARA. Thr-48 is subject to Phosphothreonine. Lys-59 bears the N6-acetyllysine mark. Gly-65 provides a ligand contact to substrate. An N6-acetyllysine; alternate modification is found at Lys-73. Lys-73 carries the N6-succinyllysine; alternate modification. Position 82 is an N6-acetyllysine (Lys-82). Lys-90 carries the N6-acetyllysine; alternate modification. Lys-90 carries the post-translational modification N6-succinyllysine; alternate. A 3'-nitrotyrosine; alternate modification is found at Tyr-96. A Phosphotyrosine; alternate modification is found at Tyr-96. N6-acetyllysine; alternate is present on residues Lys-107 and Lys-122. Residues Lys-107 and Lys-122 each carry the N6-succinyllysine; alternate modification. At Ser-143 the chain carries Phosphoserine. At Lys-159 the chain carries N6-acetyllysine; alternate. Lys-159 is modified (N6-succinyllysine; alternate). Residue Trp-162 participates in substrate binding. Lys-185 carries the N6-acetyllysine; alternate modification. At Lys-185 the chain carries N6-succinyllysine; alternate. Residue Asn-215 coordinates substrate. Lys-227 carries the N6-succinyllysine modification. The residue at position 234 (Lys-234) is an N6-acetyllysine. Lys-279 and Lys-296 each carry N6-acetyllysine; alternate. Lys-279 is modified (N6-(pyridoxal phosphate)lysine; alternate). Lys-296 is subject to N6-succinyllysine; alternate. Lys-302 is modified (N6-acetyllysine). An N6-acetyllysine; alternate modification is found at Lys-309. Lys-309 is modified (N6-succinyllysine; alternate). At Arg-313 the chain carries Asymmetric dimethylarginine. Position 333 is a phosphothreonine (Thr-333). Lys-338 carries the N6-acetyllysine; alternate modification. Lys-338 bears the N6-succinyllysine; alternate mark. At Lys-345 the chain carries N6-acetyllysine. Residue Lys-363 is modified to N6-acetyllysine; alternate. Lys-363 bears the N6-succinyllysine; alternate mark. Residues Lys-364 and Lys-387 each carry the N6-acetyllysine modification. Lys-396 and Lys-404 each carry N6-acetyllysine; alternate. N6-succinyllysine; alternate occurs at positions 396 and 404. Arg-407 contributes to the substrate binding site.

The protein belongs to the class-I pyridoxal-phosphate-dependent aminotransferase family. In terms of assembly, homodimer. Pyridoxal 5'-phosphate serves as cofactor.

The protein resides in the mitochondrion matrix. It localises to the cell membrane. It catalyses the reaction L-aspartate + 2-oxoglutarate = oxaloacetate + L-glutamate. The enzyme catalyses L-kynurenine + 2-oxoglutarate = kynurenate + L-glutamate + H2O. In terms of biological role, catalyzes the irreversible transamination of the L-tryptophan metabolite L-kynurenine to form kynurenic acid (KA). As a member of the malate-aspartate shuttle, it has a key role in the intracellular NAD(H) redox balance. Is important for metabolite exchange between mitochondria and cytosol, and for amino acid metabolism. Facilitates cellular uptake of long-chain free fatty acids. In Pongo abelii (Sumatran orangutan), this protein is Aspartate aminotransferase, mitochondrial (GOT2).